The primary structure comprises 232 residues: Two-component response regulator ORR4 (232 aa).

Residues 11-147 (HVLAVDDSLI…DMKKLKSHLL (137 aa)) form the Response regulatory domain. The residue at position 80 (D80) is a 4-aspartylphosphate. 2 disordered regions span residues 153-174 (LPMA…AASA) and 202-232 (AAAM…AVET). Over residues 209 to 232 (VISSPDQRTKPRLSSTSSGLAVET) the composition is skewed to polar residues.

Belongs to the ARR family. Type-A subfamily. Two-component system major event consists of a His-to-Asp phosphorelay between a sensor histidine kinase (HK) and a response regulator (RR). In plants, the His-to-Asp phosphorelay involves an additional intermediate named Histidine-containing phosphotransfer protein (HPt). This multistep phosphorelay consists of a His-Asp-His-Asp sequential transfer of a phosphate group between first a His and an Asp of the HK protein, followed by the transfer to a conserved His of the HPt protein and finally the transfer to an Asp in the receiver domain of the RR protein. As to expression, expressed in mature leaves and flowers, and at low levels in roots and shoots.

Its function is as follows. Functions as a response regulator involved in His-to-Asp phosphorelay signal transduction system. Phosphorylation of the Asp residue in the receiver domain activates the ability of the protein to promote the transcription of target genes. Type-A response regulators seem to act as negative regulators of the cytokinin signaling. This chain is Two-component response regulator ORR4, found in Oryza sativa subsp. indica (Rice).